The chain runs to 352 residues: Mitochondrial ubiquitin ligase activator of NFKB 1 (352 aa).

Over 1-8 (MESGGRPS) the chain is Cytoplasmic. The chain crosses the membrane as a helical span at residues 9-29 (LCQFILLGTTSVVTAALYSVY). Residues 30 to 238 (RQKARVSQEL…LLQRQESSVR (209 aa)) are Mitochondrial intermembrane-facing. A Glycyl lysine isopeptide (Lys-Gly) (interchain with G-Cter in ubiquitin) cross-link involves residue lysine 52. Residues 239–259 (LWKVLALVFGFATCATLFFIL) traverse the membrane as a helical segment. Over 260 to 352 (RKQYLQRQER…ITRVIPLYNS (93 aa)) the chain is Cytoplasmic. Glycyl lysine isopeptide (Lys-Gly) (interchain with G-Cter in ubiquitin) cross-links involve residues lysine 273 and lysine 299. An RING-type zinc finger spans residues 302–340 (CVVCLSSFKSCVFLECGHVCSCTECYRALPEPKKCPICR).

Homooligomer. Interacts with MAP3K7/TAK1. Interacts with UBC9. Interacts with and sumoylates DNM1L. Interacts with MAVS. Interacts with TP53 (via N-terminus); the interaction leads to ubiquitination and proteasomal degradation of TP53. Post-translationally, ubiquitinated by PRKN during mitophagy, leading to its degradation and enhancement of mitophagy. Deubiquitinated by USP30. In terms of tissue distribution, widely expressed with highest levels in the heart, skeletal muscle, placenta, kidney and liver. Barely detectable in colon and thymus.

Its subcellular location is the mitochondrion outer membrane. It localises to the peroxisome. It carries out the reaction S-ubiquitinyl-[E2 ubiquitin-conjugating enzyme]-L-cysteine + [acceptor protein]-L-lysine = [E2 ubiquitin-conjugating enzyme]-L-cysteine + N(6)-ubiquitinyl-[acceptor protein]-L-lysine.. It participates in protein modification; protein ubiquitination. Its pathway is protein modification; protein sumoylation. Exhibits weak E3 ubiquitin-protein ligase activity. E3 ubiquitin ligases accept ubiquitin from an E2 ubiquitin-conjugating enzyme in the form of a thioester and then directly transfer the ubiquitin to targeted substrates. Can ubiquitinate AKT1 preferentially at 'Lys-284' involving 'Lys-48'-linked polyubiquitination and seems to be involved in regulation of Akt signaling by targeting phosphorylated Akt to proteasomal degradation. Mediates polyubiquitination of cytoplasmic TP53 at 'Lys-24' which targets TP53 for proteasomal degradation, thus reducing TP53 levels in the cytoplasm and mitochondrion. Proposed to preferentially act as a SUMO E3 ligase at physiological concentrations. Plays a role in the control of mitochondrial morphology by promoting mitochondrial fragmentation, and influences mitochondrial localization. Likely to promote mitochondrial fission through negatively regulating the mitochondrial fusion proteins MFN1 and MFN2, acting in a pathway that is parallel to the PRKN/PINK1 regulatory pathway. May also be involved in the sumoylation of the membrane fission protein DNM1L. Inhibits cell growth. When overexpressed, activates JNK through MAP3K7/TAK1 and induces caspase-dependent apoptosis. Involved in the modulation of innate immune defense against viruses by inhibiting RIGI-dependent antiviral response. Can mediate RIGI sumoylation and disrupt its polyubiquitination. The protein is Mitochondrial ubiquitin ligase activator of NFKB 1 (MUL1) of Homo sapiens (Human).